Reading from the N-terminus, the 320-residue chain is uncharacterized protein (320 aa).

Belongs to the anthranilate phosphoribosyltransferase family.

This is an uncharacterized protein from Escherichia coli (strain K12).